We begin with the raw amino-acid sequence, 503 residues long: Cobyric acid synthase (503 aa).

The region spanning 251–450 is the GATase cobBQ-type domain; the sequence is DLDIAVIRLP…IHGIFENAAF (200 aa). Cysteine 331 functions as the Nucleophile in the catalytic mechanism. Residue histidine 442 is part of the active site.

This sequence belongs to the CobB/CobQ family. CobQ subfamily.

It participates in cofactor biosynthesis; adenosylcobalamin biosynthesis. Catalyzes amidations at positions B, D, E, and G on adenosylcobyrinic A,C-diamide. NH(2) groups are provided by glutamine, and one molecule of ATP is hydrogenolyzed for each amidation. The sequence is that of Cobyric acid synthase from Dehalococcoides mccartyi (strain CBDB1).